We begin with the raw amino-acid sequence, 524 residues long: Protein hunchback (524 aa).

Disordered regions lie at residues 42–86 (IVKR…PQTQ) and 101–187 (YNHN…DEQS). A compositionally biased stretch (low complexity) spans 59–75 (SGSDFHSSSPSSDTSQD). Residues 76-86 (LQHSYQSPQTQ) show a composition bias toward polar residues. Composition is skewed to basic and acidic residues over residues 118–127 (KSEKEEKDME), 138–154 (RKPDDNQDHLRRLEMSL), and 164–178 (TSEHSVDELSGKSDN). 4 C2H2-type zinc fingers span residues 202-224 (FKCKQCDFVAITKLEQWNHSKVH), 231-253 (LTCPKCPFITEYKHHLEYHLRNH), 259-281 (FQCNKCDYTCVNKSMLNSHMKSH), and 298-311 (YCHSLKIHLRRYGH). The segment at 402–442 (DLSKPGCSYTGEQKSRRKGPAFKVDPTQVESEEEDEETSTT) is disordered. 2 C2H2-type zinc fingers span residues 471-493 (NSCQYCNIAFGDAVLYTIHMGYH) and 499-523 (FTCNMCGVECSDKVSFFLHIARVSH).

Belongs to the hunchback C2H2-type zinc-finger protein family.

It localises to the nucleus. Gap class segmentation protein that controls development of head structures. This Tribolium castaneum (Red flour beetle) protein is Protein hunchback (hb).